A 358-amino-acid chain; its full sequence is UDP-N-acetylglucosamine--N-acetylmuramyl-(pentapeptide) pyrophosphoryl-undecaprenol N-acetylglucosamine transferase (358 aa).

UDP-N-acetyl-alpha-D-glucosamine-binding positions include 11–13, N120, R161, S188, and Q282; that span reads TGG.

It belongs to the glycosyltransferase 28 family. MurG subfamily.

The protein resides in the cell inner membrane. The catalysed reaction is di-trans,octa-cis-undecaprenyl diphospho-N-acetyl-alpha-D-muramoyl-L-alanyl-D-glutamyl-meso-2,6-diaminopimeloyl-D-alanyl-D-alanine + UDP-N-acetyl-alpha-D-glucosamine = di-trans,octa-cis-undecaprenyl diphospho-[N-acetyl-alpha-D-glucosaminyl-(1-&gt;4)]-N-acetyl-alpha-D-muramoyl-L-alanyl-D-glutamyl-meso-2,6-diaminopimeloyl-D-alanyl-D-alanine + UDP + H(+). The protein operates within cell wall biogenesis; peptidoglycan biosynthesis. Cell wall formation. Catalyzes the transfer of a GlcNAc subunit on undecaprenyl-pyrophosphoryl-MurNAc-pentapeptide (lipid intermediate I) to form undecaprenyl-pyrophosphoryl-MurNAc-(pentapeptide)GlcNAc (lipid intermediate II). This Synechococcus sp. (strain CC9605) protein is UDP-N-acetylglucosamine--N-acetylmuramyl-(pentapeptide) pyrophosphoryl-undecaprenol N-acetylglucosamine transferase.